The sequence spans 227 residues: Ribose-5-phosphate isomerase A (227 aa).

Substrate-binding positions include 30–33, 86–89, and 99–104; these read TGST, DGAD, and KGMGGA. The active-site Proton acceptor is glutamate 108. Residue lysine 126 coordinates substrate.

It belongs to the ribose 5-phosphate isomerase family. In terms of assembly, homodimer.

It carries out the reaction aldehydo-D-ribose 5-phosphate = D-ribulose 5-phosphate. It functions in the pathway carbohydrate degradation; pentose phosphate pathway; D-ribose 5-phosphate from D-ribulose 5-phosphate (non-oxidative stage): step 1/1. Involved in the first step of the non-oxidative branch of the pentose phosphate pathway. It catalyzes the reversible conversion of ribose-5-phosphate to ribulose 5-phosphate. Can also act on D-ribose-5-diphosphate and D-ribose-5-triphosphate as substrate. The polypeptide is Ribose-5-phosphate isomerase A (Thermus thermophilus (strain ATCC BAA-163 / DSM 7039 / HB27)).